Here is a 157-residue protein sequence, read N- to C-terminus: Peptide methionine sulfoxide reductase MsrA (157 aa).

Cys10 is an active-site residue.

The protein belongs to the MsrA Met sulfoxide reductase family.

It carries out the reaction L-methionyl-[protein] + [thioredoxin]-disulfide + H2O = L-methionyl-(S)-S-oxide-[protein] + [thioredoxin]-dithiol. The catalysed reaction is [thioredoxin]-disulfide + L-methionine + H2O = L-methionine (S)-S-oxide + [thioredoxin]-dithiol. Its function is as follows. Has an important function as a repair enzyme for proteins that have been inactivated by oxidation. Catalyzes the reversible oxidation-reduction of methionine sulfoxide in proteins to methionine. The polypeptide is Peptide methionine sulfoxide reductase MsrA (Clostridium perfringens (strain ATCC 13124 / DSM 756 / JCM 1290 / NCIMB 6125 / NCTC 8237 / Type A)).